Reading from the N-terminus, the 630-residue chain is tRNA uridine 5-carboxymethylaminomethyl modification enzyme MnmG (630 aa).

FAD is bound at residue 13–18 (GGGHAG). An NAD(+)-binding site is contributed by 273 to 287 (GPRYCPSIEDKVMRF).

This sequence belongs to the MnmG family. In terms of assembly, homodimer. Heterotetramer of two MnmE and two MnmG subunits. FAD serves as cofactor.

It is found in the cytoplasm. Functionally, NAD-binding protein involved in the addition of a carboxymethylaminomethyl (cmnm) group at the wobble position (U34) of certain tRNAs, forming tRNA-cmnm(5)s(2)U34. This Actinobacillus pleuropneumoniae serotype 5b (strain L20) protein is tRNA uridine 5-carboxymethylaminomethyl modification enzyme MnmG.